Consider the following 295-residue polypeptide: Zinc finger CCCH domain-containing protein 44 (295 aa).

Residues 1 to 31 (MEAGGGKRAAPEGTNGAAKRARASESSQVGV) are disordered. 2 consecutive C3H1-type zinc fingers follow at residues 32-60 (GSKLKPCTKFFSTSGCPFGSSCHFLHNFP) and 98-126 (SVKTRMCNKYNTAEGCKWGSKCHFAHGER). A KH domain is found at 166 to 230 (SATAKISVDA…DQIKHASAMV (65 aa)). A C3H1-type 3 zinc finger spans residues 259–286 (NFKTKLCENFNKGSCTFGDRCHFAHGES).

This Oryza sativa subsp. japonica (Rice) protein is Zinc finger CCCH domain-containing protein 44.